Reading from the N-terminus, the 52-residue chain is Conotoxin-like peptide 2 (52 aa).

Positions 1–18 (MKFSTILLLVCPTVALSA) are cleaved as a signal peptide. 3 cysteine pairs are disulfide-bonded: Cys24/Cys38, Cys31/Cys42, and Cys37/Cys49.

The protein resides in the secreted. This is Conotoxin-like peptide 2 (CTL-2) from Orgyia pseudotsugata (Douglas-fir tussock moth).